A 114-amino-acid chain; its full sequence is Superoxide dismutase [Cu-Zn] (114 aa).

Cu cation is bound by residues His-37, His-39, and His-54. Zn(2+)-binding residues include His-54, His-62, His-71, and Asp-74. Residues 54–80 form a disordered region; sequence HFNPGNKEHGAPTDGNRHLGDLGNIQA. A compositionally biased stretch (basic and acidic residues) spans 59–73; that stretch reads NKEHGAPTDGNRHLG. His-111 lines the Cu cation pocket.

It belongs to the Cu-Zn superoxide dismutase family. Homodimer. It depends on Cu cation as a cofactor. Zn(2+) serves as cofactor.

The protein resides in the cytoplasm. The catalysed reaction is 2 superoxide + 2 H(+) = H2O2 + O2. In terms of biological role, destroys radicals which are normally produced within the cells and which are toxic to biological systems. This is Superoxide dismutase [Cu-Zn] from Drosophila tolteca (Fruit fly).